The following is a 229-amino-acid chain: Ribonuclease HII (229 aa).

One can recognise an RNase H type-2 domain in the interval 42 to 229; sequence TRIAGVDEVG…KPVHKILYQE (188 aa). The a divalent metal cation site is built by D48, E49, and D139.

Belongs to the RNase HII family. The cofactor is Mn(2+). It depends on Mg(2+) as a cofactor.

It localises to the cytoplasm. It catalyses the reaction Endonucleolytic cleavage to 5'-phosphomonoester.. Endonuclease that specifically degrades the RNA of RNA-DNA hybrids. This is Ribonuclease HII from Ruegeria sp. (strain TM1040) (Silicibacter sp.).